Here is a 104-residue protein sequence, read N- to C-terminus: MAIVKVTDSDFDSKIESGVKLVDFWATWCGPCKMIAPVLEELAGDYDGKADILKLDVDENPSTAAKYEVMSIPTLIVFKDGEPVDKVVGFQPKENLAEVLDKHL.

Positions alanine 2–leucine 104 constitute a Thioredoxin domain. A disulfide bond links cysteine 29 and cysteine 32.

This sequence belongs to the thioredoxin family.

Functionally, component of the thioredoxin-thioredoxin reductase system. Participates in various redox reactions through the reversible oxidation of its active center dithiol to a disulfide and catalyzes dithiol-disulfide exchange reactions. The protein is Thioredoxin (trxA) of Staphylococcus epidermidis (strain ATCC 35984 / DSM 28319 / BCRC 17069 / CCUG 31568 / BM 3577 / RP62A).